Reading from the N-terminus, the 1192-residue chain is Homeodomain-interacting protein kinase 3 (1192 aa).

A Glycyl lysine isopeptide (Lys-Gly) (interchain with G-Cter in SUMO); alternate cross-link involves residue K27. K27 is covalently cross-linked (Glycyl lysine isopeptide (Lys-Gly) (interchain with G-Cter in SUMO2); alternate). In terms of domain architecture, Protein kinase spans 197–525; sequence YEVLDFLGRG…PIETLNHPFV (329 aa). ATP is bound by residues 203-211 and K226; that span reads LGRGTFGQV. The Proton acceptor role is filled by D322. Y359 bears the Phosphotyrosine mark. Positions 767–921 are interaction with AR; it reads QNRSNSLQNT…NSMSDDEQES (155 aa). The interaction with FAS stretch occupies residues 775–868; the sequence is NTNIPHSAFI…SPRPSLRECK (94 aa). Residues 799 to 829 are disordered; sequence CVDTQDNHTSEGEAGTCREASVRQDSSVSDK. The tract at residues 832–988 is required for localization to nuclear speckles; the sequence is QTIIIADSPS…ESGLSVDEHM (157 aa). An SUMO interaction motifs (SIM); required for nuclear localization and kinase activity region spans residues 843–895; the sequence is AVSVITISSDSDDEETSPRPSLRECKGSLDCEACQSTLNIDRMCSLSSPDSTL. The interval 847 to 857 is interaction with UBL1; the sequence is ITISSDSDDEE. Over residues 889-906 the composition is skewed to low complexity; it reads SSPDSTLSTSSSGQSSPS. Disordered stretches follow at residues 889 to 943 and 956 to 1023; these read SSPD…PFAE and LGTC…KPAA. K1185 is covalently cross-linked (Glycyl lysine isopeptide (Lys-Gly) (interchain with G-Cter in SUMO)).

This sequence belongs to the protein kinase superfamily. CMGC Ser/Thr protein kinase family. HIPK subfamily. In terms of assembly, interacts with UBL1/SUMO-1. Interacts with and stabilizes ligand-bound androgen receptor (AR). Interacts with Nkx1-2. Interacts with FAS and DAXX. Probably part of a complex consisting of HIPK3, FAS and FADD. Binds to NR5A1/SF1, SPEN/MINT and RUNX2. Post-translationally, autophosphorylated, but autophosphorylation is not required for catalytic activity. May be sumoylated. As to expression, heart, skeletal muscle, spleen, testis and lung.

The protein resides in the cytoplasm. It localises to the nucleus. The enzyme catalyses L-seryl-[protein] + ATP = O-phospho-L-seryl-[protein] + ADP + H(+). It catalyses the reaction L-threonyl-[protein] + ATP = O-phospho-L-threonyl-[protein] + ADP + H(+). Its function is as follows. Serine/threonine-protein kinase involved in transcription regulation, apoptosis and steroidogenic gene expression. Phosphorylates JUN and RUNX2. Seems to negatively regulate apoptosis by promoting FADD phosphorylation. Enhances androgen receptor-mediated transcription. May act as a transcriptional corepressor for NK homeodomain transcription factors. The phosphorylation of NR5A1 activates SF1 leading to increased steroidogenic gene expression upon cAMP signaling pathway stimulation. In osteoblasts, supports transcription activation: phosphorylates RUNX2 that synergizes with SPEN/MINT to enhance FGFR2-mediated activation of the osteocalcin FGF-responsive element (OCFRE). The polypeptide is Homeodomain-interacting protein kinase 3 (Hipk3) (Mus musculus (Mouse)).